The primary structure comprises 260 residues: Proteasome subunit alpha (260 aa).

The disordered stretch occupies residues 241–260; the sequence is VEEEEVKEKEEDYSELDSHY.

It belongs to the peptidase T1A family. The 20S proteasome core is composed of 14 alpha and 14 beta subunits that assemble into four stacked heptameric rings, resulting in a barrel-shaped structure. The two inner rings, each composed of seven catalytic beta subunits, are sandwiched by two outer rings, each composed of seven alpha subunits. The catalytic chamber with the active sites is on the inside of the barrel. Has a gated structure, the ends of the cylinder being occluded by the N-termini of the alpha-subunits. Is capped at one or both ends by the proteasome regulatory ATPase, PAN.

It is found in the cytoplasm. The formation of the proteasomal ATPase PAN-20S proteasome complex, via the docking of the C-termini of PAN into the intersubunit pockets in the alpha-rings, triggers opening of the gate for substrate entry. Interconversion between the open-gate and close-gate conformations leads to a dynamic regulation of the 20S proteasome proteolysis activity. In terms of biological role, component of the proteasome core, a large protease complex with broad specificity involved in protein degradation. The sequence is that of Proteasome subunit alpha from Pyrococcus horikoshii (strain ATCC 700860 / DSM 12428 / JCM 9974 / NBRC 100139 / OT-3).